We begin with the raw amino-acid sequence, 156 residues long: Arginine repressor (156 aa).

The protein belongs to the ArgR family.

The protein localises to the cytoplasm. It participates in amino-acid biosynthesis; L-arginine biosynthesis [regulation]. Functionally, regulates arginine biosynthesis genes. This chain is Arginine repressor, found in Shewanella sp. (strain ANA-3).